The primary structure comprises 197 residues: Fe/S biogenesis protein NfuA (197 aa).

2 residues coordinate [4Fe-4S] cluster: cysteine 155 and cysteine 158.

This sequence belongs to the NfuA family. In terms of assembly, homodimer. Requires [4Fe-4S] cluster as cofactor.

Its function is as follows. Involved in iron-sulfur cluster biogenesis. Binds a 4Fe-4S cluster, can transfer this cluster to apoproteins, and thereby intervenes in the maturation of Fe/S proteins. Could also act as a scaffold/chaperone for damaged Fe/S proteins. The chain is Fe/S biogenesis protein NfuA from Pseudomonas syringae pv. syringae (strain B728a).